Here is a 923-residue protein sequence, read N- to C-terminus: Probable dipeptidyl-aminopeptidase B (923 aa).

Positions 1–16 (MATEKGHGRDDEERVP) are enriched in basic and acidic residues. The tract at residues 1–21 (MATEKGHGRDDEERVPLTRGS) is disordered. The Cytoplasmic portion of the chain corresponds to 1–99 (MATEKGHGRD…KPMHKSVKIA (99 aa)). A helical; Signal-anchor for type II membrane protein membrane pass occupies residues 100–120 (LWTLLFLSLGGWSLAFVLFIF). The Vacuolar portion of the chain corresponds to 121-923 (RSHDTYETPI…GLSYNFKHLH (803 aa)). N135, N351, and N574 each carry an N-linked (GlcNAc...) asparagine glycan. The active-site Charge relay system is the S756. A glycan (N-linked (GlcNAc...) asparagine) is linked at N815. Catalysis depends on charge relay system residues D833 and H866. A glycan (N-linked (GlcNAc...) asparagine) is linked at N902.

The protein belongs to the peptidase S9B family.

Its subcellular location is the vacuole membrane. The enzyme catalyses Release of an N-terminal dipeptide, Xaa-Yaa-|-Zaa-, from a polypeptide, preferentially when Yaa is Pro, provided Zaa is neither Pro nor hydroxyproline.. In terms of biological role, type IV dipeptidyl-peptidase which removes N-terminal dipeptides sequentially from polypeptides having unsubstituted N-termini provided that the penultimate residue is proline. This chain is Probable dipeptidyl-aminopeptidase B (DAPB), found in Ajellomyces capsulatus (strain G186AR / H82 / ATCC MYA-2454 / RMSCC 2432) (Darling's disease fungus).